The chain runs to 124 residues: Small ribosomal subunit protein uS12 (124 aa).

A 3-methylthioaspartic acid modification is found at Asp89. The tract at residues 104–124 is disordered; sequence TDGVENRKQSRSKYGTKRPKK. A compositionally biased stretch (basic residues) spans 112–124; it reads QSRSKYGTKRPKK.

It belongs to the universal ribosomal protein uS12 family. As to quaternary structure, part of the 30S ribosomal subunit. Contacts proteins S8 and S17. May interact with IF1 in the 30S initiation complex.

Functionally, with S4 and S5 plays an important role in translational accuracy. Interacts with and stabilizes bases of the 16S rRNA that are involved in tRNA selection in the A site and with the mRNA backbone. Located at the interface of the 30S and 50S subunits, it traverses the body of the 30S subunit contacting proteins on the other side and probably holding the rRNA structure together. The combined cluster of proteins S8, S12 and S17 appears to hold together the shoulder and platform of the 30S subunit. This Thermosipho melanesiensis (strain DSM 12029 / CIP 104789 / BI429) protein is Small ribosomal subunit protein uS12.